Consider the following 361-residue polypeptide: Protein RecA (361 aa).

ATP is bound at residue 77 to 84; the sequence is GPESSGKT.

Belongs to the RecA family.

Its subcellular location is the cytoplasm. Functionally, can catalyze the hydrolysis of ATP in the presence of single-stranded DNA, the ATP-dependent uptake of single-stranded DNA by duplex DNA, and the ATP-dependent hybridization of homologous single-stranded DNAs. It interacts with LexA causing its activation and leading to its autocatalytic cleavage. This chain is Protein RecA, found in Sinorhizobium fredii (strain NBRC 101917 / NGR234).